Here is a 605-residue protein sequence, read N- to C-terminus: MSSPNNQPLSCSLRQLSISPTAPPGDVGTPGSLLSLSSSSSSNTDSSGSSLGSLSLNSNSSGSDNDSKVSSPSREIPSDPPLPRAVPTVRLGRSTSSRSRNSLNLDMKDPSEKPRRSLPTAAGQNNIGSPPTPPGPFPGGLSTDIQEKLKAFHASRSKSMPEVVNKISSPTTPIVGMGQRGSYPLPNSQLAGRLSNSPVKSPNMPESGLAKSLAAARNPLLNRPTSFNRQTRIRRAPPGKLDLSNSNPTSPVSPSSMASRRGLNIPPTLKQAVSETPFSTFSDILDAKSGTLNFKNKAVLNSEGVNFSSGSSFRINMSEIIKLEELGKGNYGVVYKALHQPTGVTMALKEIRLSLEEATFNQIIMELDILHKAVSPYIVDFYGAFFVEGSVFICMEYMDAGSMDKLYAGGIKDEGVLARTAYAVVQGLKTLKEEHNIIHRDVKPTNVLVNSNGQVKLCDFGVSGNLVASISKTNIGCQSYMAPERIRVGGPTNGVLTYTVQADVWSLGLTILEMALGAYPYPPESYTSIFAQLSAICDGDPPSLPDSFSPEARDFVNKCLNKNPSLRPDYHELANHPWLLKYQNADVDMASWAKGALKEKGEKRS.

Residues 1-20 show a composition bias toward polar residues; sequence MSSPNNQPLSCSLRQLSISP. The segment at 1–141 is disordered; it reads MSSPNNQPLS…TPPGPFPGGL (141 aa). Composition is skewed to low complexity over residues 31-73 and 90-105; these read GSLL…SSPS and RLGR…SLNL. Residues 106–115 are compositionally biased toward basic and acidic residues; that stretch reads DMKDPSEKPR. Ser168 is modified (phosphoserine). Polar residues predominate over residues 188–200; the sequence is SQLAGRLSNSPVK. Residues 188-263 form a disordered region; the sequence is SQLAGRLSNS…PSSMASRRGL (76 aa). Positions 244–256 are enriched in low complexity; it reads SNSNPTSPVSPSS. Ser253 carries the post-translational modification Phosphoserine. The Protein kinase domain occupies 320 to 579; that stretch reads IIKLEELGKG…YHELANHPWL (260 aa). ATP contacts are provided by residues 326 to 334 and Lys349; that span reads LGKGNYGVV. Catalysis depends on Asp441, which acts as the Proton acceptor. Ser469 carries the phosphoserine modification. Thr473 carries the post-translational modification Phosphothreonine.

The protein belongs to the protein kinase superfamily. STE Ser/Thr protein kinase family. MAP kinase kinase subfamily. Post-translationally, dephosphorylated by pyp1 and pyp2.

It catalyses the reaction L-seryl-[protein] + ATP = O-phospho-L-seryl-[protein] + ADP + H(+). The catalysed reaction is L-threonyl-[protein] + ATP = O-phospho-L-threonyl-[protein] + ADP + H(+). It carries out the reaction L-tyrosyl-[protein] + ATP = O-phospho-L-tyrosyl-[protein] + ADP + H(+). Dosage-dependent regulator of mitosis with serine/ threonine protein kinase activity. May play a role in the integration of nutritional sensing with the control over entry into mitosis. It may interact with cdc25, wee1 and win1. May activate sty1. The protein is Protein kinase wis1 (wis1) of Schizosaccharomyces pombe (strain 972 / ATCC 24843) (Fission yeast).